Consider the following 279-residue polypeptide: S-formylglutathione hydrolase (279 aa).

Catalysis depends on charge relay system residues serine 150, aspartate 226, and histidine 258.

It belongs to the esterase D family.

It carries out the reaction S-formylglutathione + H2O = formate + glutathione + H(+). In terms of biological role, serine hydrolase involved in the detoxification of formaldehyde. Hydrolyzes S-formylglutathione to glutathione and formate. The sequence is that of S-formylglutathione hydrolase (fghA) from Paracoccus denitrificans (strain Pd 1222).